Here is a 441-residue protein sequence, read N- to C-terminus: Chromatin structure-remodeling complex subunit SFH1 (441 aa).

Over residues 124 to 137 the composition is skewed to acidic residues; the sequence is DFDANDFEDDDDDD. Disordered regions lie at residues 124-183 and 383-407; these read DFDA…AAPP and EMTPEEMQKREMERDRSSRRLKRES. Composition is skewed to basic and acidic residues over residues 138–147 and 155–166; these read QSQRESRDGS and DGTKKEEQDKFA.

It belongs to the SNF5 family.

The protein localises to the nucleus. Part of the chromatin structure-remodeling complex (RSC) which is involved in transcription regulation and nucleosome positioning. RSC is responsible for the transfer of a histone octamer from a nucleosome core particle to naked DNA. The reaction requires ATP and involves an activated RSC-nucleosome intermediate. Remodeling reaction also involves DNA translocation, DNA twist and conformational change. As a reconfigurer of centromeric and flanking nucleosomes, RSC complex is required both for proper kinetochore function in chromosome segregation and, via a PKC1-dependent signaling pathway, for organization of the cellular cytoskeleton. This subunit is essential for mitotic growth and required for cell cycle progression. This is Chromatin structure-remodeling complex subunit SFH1 (SFH1) from Yarrowia lipolytica (strain CLIB 122 / E 150) (Yeast).